Consider the following 889-residue polypeptide: Envelope glycoprotein gp160 (889 aa).

An N-terminal signal peptide occupies residues 1-22; sequence MGCLGNQLLIALLLLSASGIYC. Over 23 to 704 the chain is Extracellular; that stretch reads VQYVTVFYGI…TSWIKYIQYG (682 aa). Residue asparagine 37 is glycosylated (N-linked (GlcNAc...) asparagine; by host). Cysteine 44 and cysteine 57 are oxidised to a cystine. Residues asparagine 70 and asparagine 114 are each glycosylated (N-linked (GlcNAc...) asparagine; by host). Cystine bridges form between cysteine 101/cysteine 226, cysteine 108/cysteine 217, cysteine 113/cysteine 175, cysteine 239/cysteine 269, and cysteine 249/cysteine 261. Residues 113–174 form a V1 region; sequence CNKSETDRWG…TGLEQEPMVS (62 aa). Residues 120-145 form a disordered region; the sequence is RWGLTGTPAPTTTQTTTTQASTTPTS. Positions 126–145 are enriched in low complexity; the sequence is TPAPTTTQTTTTQASTTPTS. 19 N-linked (GlcNAc...) asparagine; by host glycosylation sites follow: asparagine 153, asparagine 163, asparagine 178, asparagine 191, asparagine 206, asparagine 218, asparagine 250, asparagine 253, asparagine 260, asparagine 284, asparagine 290, asparagine 301, asparagine 312, asparagine 322, asparagine 377, asparagine 422, asparagine 470, asparagine 486, and asparagine 489. Residues 175–217 form a V2 region; it reads CKFNMTGLKRDKKREYNETWYSRDLVCEQNSNETDSKCYMNHC. Residues 317–349 form a V3 region; it reads CRRPGNKTVLPVTIMSGLVFHSQPINERPKQAW. A disulfide bridge connects residues cysteine 317 and cysteine 350. 2 cysteine pairs are disulfide-bonded: cysteine 401/cysteine 469 and cysteine 408/cysteine 442. Residues 408–442 are V4; it reads CKMNWFLNWVENIQNGSRWTSQNQKERQRRNYVPC. Positions 485–492 are V5; sequence GNETNITM. Positions 536 to 556 are fusion peptide; that stretch reads GVFVLGFLGFLATAGSAMSAA. The tract at residues 599–615 is immunosuppression; it reads LQTRVTAIEKYLKDQAQ. 3 N-linked (GlcNAc...) asparagine; by host glycosylation sites follow: asparagine 635, asparagine 644, and asparagine 660. Residues 648–675 adopt a coiled-coil conformation; sequence QEWEKQVNFLEANITQSLEEAQIQQEKN. Positions 681–702 are MPER; binding to GalCer; it reads KLNSWDIFGNWFDLTSWIKYIQ. A helical transmembrane segment spans residues 705-725; it reads VLIVLGVIGLRIVIYVVQMLA. Residues 726-889 are Cytoplasmic-facing; that stretch reads RLRQGYRPVF…IRQGLELTLL (164 aa). The short motif at 731-734 is the YXXV motif; contains endocytosis signal element; it reads YRPV. The S-palmitoyl cysteine; by host moiety is linked to residue cysteine 797. A Di-leucine internalization motif motif is present at residues 888 to 889; it reads LL.

In terms of assembly, the mature envelope protein (Env) consists of a homotrimer of non-covalently associated gp120-gp41 heterodimers. The resulting complex protrudes from the virus surface as a spike. Interacts with host CD4 and CCR5. Gp120 also interacts with the C-type lectins CD209/DC-SIGN and CLEC4M/DC-SIGNR (collectively referred to as DC-SIGN(R)). The mature envelope protein (Env) consists of a homotrimer of non-covalently associated gp120-gp41 heterodimers. The resulting complex protrudes from the virus surface as a spike. Post-translationally, specific enzymatic cleavages in vivo yield mature proteins. Envelope glycoproteins are synthesized as an inactive precursor that is heavily N-glycosylated and processed likely by host cell furin in the Golgi to yield the mature SU and TM proteins. The cleavage site between SU and TM requires the minimal sequence [KR]-X-[KR]-R. In terms of processing, palmitoylation of the transmembrane protein and of Env polyprotein (prior to its proteolytic cleavage) is essential for their association with host cell membrane lipid rafts. Palmitoylation is therefore required for envelope trafficking to classical lipid rafts, but not for viral replication.

The protein resides in the virion membrane. It is found in the host cell membrane. Its subcellular location is the host endosome membrane. The surface protein gp120 (SU) attaches the virus to the host lymphoid cell by binding to the primary receptor CD4. This interaction induces a structural rearrangement creating a high affinity binding site for a chemokine coreceptor like CCR5. This peculiar 2 stage receptor-interaction strategy allows gp120 to maintain the highly conserved coreceptor-binding site in a cryptic conformation, protected from neutralizing antibodies. These changes are transmitted to the transmembrane protein gp41 and are thought to activate its fusogenic potential by unmasking its fusion peptide. In terms of biological role, surface protein gp120 (SU) may target the virus to gut-associated lymphoid tissue (GALT) by binding host ITGA4/ITGB7 (alpha-4/beta-7 integrins), a complex that mediates T-cell migration to the GALT. Interaction between gp120 and ITGA4/ITGB7 would allow the virus to enter GALT early in the infection, infecting and killing most of GALT's resting CD4+ T-cells. This T-cell depletion is believed to be the major insult to the host immune system leading to AIDS. Functionally, the surface protein gp120 is a ligand for CD209/DC-SIGN and CLEC4M/DC-SIGNR, which are respectively found on dendritic cells (DCs), and on endothelial cells of liver sinusoids and lymph node sinuses. These interactions allow capture of viral particles at mucosal surfaces by these cells and subsequent transmission to permissive cells. DCs are professional antigen presenting cells, critical for host immunity by inducing specific immune responses against a broad variety of pathogens. They act as sentinels in various tissues where they take up antigen, process it, and present it to T-cells following migration to lymphoid organs. SIV subverts the migration properties of dendritic cells to gain access to CD4+ T-cells in lymph nodes. Virus transmission to permissive T-cells occurs either in trans (without DCs infection, through viral capture and transmission), or in cis (following DCs productive infection, through the usual CD4-gp120 interaction), thereby inducing a robust infection. In trans infection, bound virions remain infectious over days and it is proposed that they are not degraded, but protected in non-lysosomal acidic organelles within the DCs close to the cell membrane thus contributing to the viral infectious potential during DCs' migration from the periphery to the lymphoid tissues. On arrival at lymphoid tissues, intact virions recycle back to DCs' cell surface allowing virus transmission to CD4+ T-cells. Virion capture also seems to lead to MHC-II-restricted viral antigen presentation, and probably to the activation of SIV-specific CD4+ cells. Its function is as follows. The transmembrane protein gp41 (TM) acts as a class I viral fusion protein. Under the current model, the protein has at least 3 conformational states: pre-fusion native state, pre-hairpin intermediate state, and post-fusion hairpin state. During fusion of viral and target intracellular membranes, the coiled coil regions (heptad repeats) assume a trimer-of-hairpins structure, positioning the fusion peptide in close proximity to the C-terminal region of the ectodomain. The formation of this structure appears to drive apposition and subsequent fusion of viral and target cell membranes. Complete fusion occurs in host cell endosomes. The virus undergoes clathrin-dependent internalization long before endosomal fusion, thus minimizing the surface exposure of conserved viral epitopes during fusion and reducing the efficacy of inhibitors targeting these epitopes. Membranes fusion leads to delivery of the nucleocapsid into the cytoplasm. The envelope glycoprotein gp160 precursor down-modulates cell surface CD4 antigen by interacting with it in the endoplasmic reticulum and blocking its transport to the cell surface. In terms of biological role, the gp120-gp41 heterodimer allows rapid transcytosis of the virus through CD4 negative cells such as simple epithelial monolayers of the intestinal, rectal and endocervical epithelial barriers. Both gp120 and gp41 specifically recognize glycosphingolipids galactosyl-ceramide (GalCer) or 3' sulfo-galactosyl-ceramide (GalS) present in the lipid rafts structures of epithelial cells. Binding to these alternative receptors allows the rapid transcytosis of the virus through the epithelial cells. This transcytotic vesicle-mediated transport of virions from the apical side to the basolateral side of the epithelial cells does not involve infection of the cells themselves. This is Envelope glycoprotein gp160 (env) from Simian immunodeficiency virus (isolate PBj14/BCL-3) (SIV-sm).